An 883-amino-acid polypeptide reads, in one-letter code: Serine/threonine-protein kinase greatwall (883 aa).

At Met-1 the chain carries N-acetylmethionine. The segment at Met-1–Arg-23 is disordered. The Protein kinase domain maps to Phe-35–Phe-839. Residues Ile-41–Val-49 and Lys-62 contribute to the ATP site. Residue Asp-156 is the Proton acceptor of the active site. Thr-209 and Thr-224 each carry phosphothreonine. Ser-295 bears the Phosphoserine mark. A disordered region spans residues Arg-298–Ser-317. A compositionally biased stretch (low complexity) spans Thr-301–Ser-314. 2 positions are modified to phosphoserine: Ser-373 and Ser-456. A disordered region spans residues Glu-511–Pro-530. Thr-523 is modified (phosphothreonine). Phosphoserine occurs at positions 556 and 560. A disordered region spans residues Ile-569–Asn-597. 3 positions are modified to phosphoserine: Ser-635, Ser-661, and Ser-672. Residues Arg-706–Val-737 are disordered. Positions Pro-710–Ser-720 are enriched in polar residues. Phosphothreonine is present on Thr-726. Ser-729 is modified (phosphoserine). Position 745 is a phosphothreonine; by CDK1 (Thr-745). Residues Ser-840 to Leu-883 form the AGC-kinase C-terminal domain. Phosphoserine is present on residues Ser-879 and Ser-882.

Belongs to the protein kinase superfamily. AGC Ser/Thr protein kinase family. Phosphorylation at Thr-745 by CDK1 during M phase activates its kinase activity. Maximum phosphorylation occurs in prometaphase.

The protein localises to the cytoplasm. It localises to the cytoskeleton. Its subcellular location is the microtubule organizing center. The protein resides in the centrosome. It is found in the nucleus. The enzyme catalyses L-seryl-[protein] + ATP = O-phospho-L-seryl-[protein] + ADP + H(+). The catalysed reaction is L-threonyl-[protein] + ATP = O-phospho-L-threonyl-[protein] + ADP + H(+). Its function is as follows. Serine/threonine kinase that plays a key role in M phase by acting as a regulator of mitosis entry and maintenance. Acts by promoting the inactivation of protein phosphatase 2A (PP2A) during M phase: does not directly inhibit PP2A but acts by mediating phosphorylation and subsequent activation of ARPP19 and ENSA at 'Ser-62' and 'Ser-67', respectively. ARPP19 and ENSA are phosphatase inhibitors that specifically inhibit the PPP2R2D (PR55-delta) subunit of PP2A. Inactivation of PP2A during M phase is essential to keep cyclin-B1-CDK1 activity high. Following DNA damage, it is also involved in checkpoint recovery by being inhibited. The polypeptide is Serine/threonine-protein kinase greatwall (MASTL) (Bos taurus (Bovine)).